We begin with the raw amino-acid sequence, 256 residues long: Thiazole synthase (256 aa).

Lys98 functions as the Schiff-base intermediate with DXP in the catalytic mechanism. Residues Gly159, Ala185–Gly186, and Asn207–Thr208 each bind 1-deoxy-D-xylulose 5-phosphate.

Belongs to the ThiG family. As to quaternary structure, homotetramer. Forms heterodimers with either ThiH or ThiS.

The protein localises to the cytoplasm. The enzyme catalyses [ThiS sulfur-carrier protein]-C-terminal-Gly-aminoethanethioate + 2-iminoacetate + 1-deoxy-D-xylulose 5-phosphate = [ThiS sulfur-carrier protein]-C-terminal Gly-Gly + 2-[(2R,5Z)-2-carboxy-4-methylthiazol-5(2H)-ylidene]ethyl phosphate + 2 H2O + H(+). It participates in cofactor biosynthesis; thiamine diphosphate biosynthesis. Functionally, catalyzes the rearrangement of 1-deoxy-D-xylulose 5-phosphate (DXP) to produce the thiazole phosphate moiety of thiamine. Sulfur is provided by the thiocarboxylate moiety of the carrier protein ThiS. In vitro, sulfur can be provided by H(2)S. In Syntrophobacter fumaroxidans (strain DSM 10017 / MPOB), this protein is Thiazole synthase.